We begin with the raw amino-acid sequence, 333 residues long: G-protein coupled receptor 146 (333 aa).

Residues Met1–Glu21 are Extracellular-facing. Residue Asn8 is glycosylated (N-linked (GlcNAc...) asparagine). The helical transmembrane segment at Phe22–Leu42 threads the bilayer. The Cytoplasmic segment spans residues Cys43–Tyr65. Residues Phe66 to Gly86 traverse the membrane as a helical segment. At Pro87–Tyr102 the chain is on the extracellular side. A helical transmembrane segment spans residues Ile103–Leu123. Residues Ser124 to His146 lie on the Cytoplasmic side of the membrane. The chain crosses the membrane as a helical span at residues Val147–Ile167. The Extracellular portion of the chain corresponds to Cys168 to Ala189. A helical transmembrane segment spans residues Ile190–Ile210. Over Leu211–Leu234 the chain is Cytoplasmic. The chain crosses the membrane as a helical span at residues Leu235 to Val255. The Extracellular portion of the chain corresponds to Asn256–Gln275. Residues Phe276–His296 form a helical membrane-spanning segment. Residues Arg297 to Thr333 are Cytoplasmic-facing.

The protein belongs to the G-protein coupled receptor 1 family.

It localises to the cell membrane. Functionally, G-protein coupled receptor required for the regulation of plasma cholesterol levels. This Xenopus laevis (African clawed frog) protein is G-protein coupled receptor 146 (gpr146).